The primary structure comprises 668 residues: Ras guanine nucleotide exchange factor D (668 aa).

The 198-residue stretch at 27–224 folds into the Rho-GAP domain; the sequence is KKLESIFGIA…LMVMDIDEFD (198 aa). The 126-residue stretch at 237–362 folds into the N-terminal Ras-GEF domain; it reads GESIVKAATF…YFQTFFKPVI (126 aa). The region spanning 433-663 is the Ras-GEF domain; sequence GSNIIAQQIT…HSISHKLEPR (231 aa).

Functionally, promotes the exchange of Ras-bound GDP by GTP. This Dictyostelium discoideum (Social amoeba) protein is Ras guanine nucleotide exchange factor D (gefD).